The chain runs to 230 residues: Biosynthetic peptidoglycan transglycosylase (230 aa).

Residues 10–30 traverse the membrane as a helical segment; the sequence is IFLFFIAVIFVYQFWIFSQIV.

This sequence belongs to the glycosyltransferase 51 family.

The protein localises to the cell inner membrane. It carries out the reaction [GlcNAc-(1-&gt;4)-Mur2Ac(oyl-L-Ala-gamma-D-Glu-L-Lys-D-Ala-D-Ala)](n)-di-trans,octa-cis-undecaprenyl diphosphate + beta-D-GlcNAc-(1-&gt;4)-Mur2Ac(oyl-L-Ala-gamma-D-Glu-L-Lys-D-Ala-D-Ala)-di-trans,octa-cis-undecaprenyl diphosphate = [GlcNAc-(1-&gt;4)-Mur2Ac(oyl-L-Ala-gamma-D-Glu-L-Lys-D-Ala-D-Ala)](n+1)-di-trans,octa-cis-undecaprenyl diphosphate + di-trans,octa-cis-undecaprenyl diphosphate + H(+). Its pathway is cell wall biogenesis; peptidoglycan biosynthesis. In terms of biological role, peptidoglycan polymerase that catalyzes glycan chain elongation from lipid-linked precursors. The polypeptide is Biosynthetic peptidoglycan transglycosylase (Nitrosospira multiformis (strain ATCC 25196 / NCIMB 11849 / C 71)).